Here is a 363-residue protein sequence, read N- to C-terminus: Probable cinnamyl alcohol dehydrogenase 6 (363 aa).

Cys51 lines the Zn(2+) pocket. Residue Ser53 coordinates NADP(+). 7 residues coordinate Zn(2+): His73, Glu74, Cys104, Cys107, Cys110, Cys118, and Cys167. Residues Ser171, 192 to 197 (GLGGLG), 215 to 220 (SSTTGK), Thr255, Gly279, and 302 to 304 (SGI) each bind NADP(+).

The protein belongs to the zinc-containing alcohol dehydrogenase family. In terms of assembly, homodimer. Zn(2+) is required as a cofactor. As to expression, expressed in the primary and lateral roots, and root caps. Expressed in the hypocotyl, cotyledon veins and hydathodes. In stems, expressed in the vascular cambium, interfascicular cambium and developing xylem. Expressed in the style, anthers, stamen filaments, vascular tissues of sepals, stigmatic regions in flowers, and abscission and style regions of siliques.

The catalysed reaction is (E)-cinnamyl alcohol + NADP(+) = (E)-cinnamaldehyde + NADPH + H(+). It carries out the reaction (E)-coniferol + NADP(+) = (E)-coniferaldehyde + NADPH + H(+). It catalyses the reaction (E)-sinapyl alcohol + NADP(+) = (E)-sinapaldehyde + NADPH + H(+). The enzyme catalyses (E)-4-coumaroyl alcohol + NADP(+) = (E)-4-coumaraldehyde + NADPH + H(+). The catalysed reaction is (E)-caffeyl alcohol + NADP(+) = (E)-caffeyl aldehyde + NADPH + H(+). The protein operates within aromatic compound metabolism; phenylpropanoid biosynthesis. In terms of biological role, involved in lignin biosynthesis. Catalyzes the final step specific for the production of lignin monomers. Catalyzes the NADPH-dependent reduction of coniferaldehyde, 5-hydroxyconiferaldehyde, sinapaldehyde, 4-coumaraldehyde and caffeyl aldehyde to their respective alcohols. The protein is Probable cinnamyl alcohol dehydrogenase 6 (CAD6) of Arabidopsis thaliana (Mouse-ear cress).